A 404-amino-acid chain; its full sequence is Cysteine desulfurase IscS (404 aa).

Residues 75-76 (AT), Asn155, Gln183, and 203-205 (SSH) each bind pyridoxal 5'-phosphate. N6-(pyridoxal phosphate)lysine is present on Lys206. Thr243 serves as a coordination point for pyridoxal 5'-phosphate. Cys328 serves as the catalytic Cysteine persulfide intermediate. Cys328 lines the [2Fe-2S] cluster pocket.

It belongs to the class-V pyridoxal-phosphate-dependent aminotransferase family. NifS/IscS subfamily. Homodimer. Forms a heterotetramer with IscU, interacts with other sulfur acceptors. Requires pyridoxal 5'-phosphate as cofactor.

It is found in the cytoplasm. The catalysed reaction is (sulfur carrier)-H + L-cysteine = (sulfur carrier)-SH + L-alanine. It functions in the pathway cofactor biosynthesis; iron-sulfur cluster biosynthesis. Master enzyme that delivers sulfur to a number of partners involved in Fe-S cluster assembly, tRNA modification or cofactor biosynthesis. Catalyzes the removal of elemental sulfur atoms from cysteine to produce alanine. Functions as a sulfur delivery protein for Fe-S cluster synthesis onto IscU, an Fe-S scaffold assembly protein, as well as other S acceptor proteins. This chain is Cysteine desulfurase IscS, found in Haemophilus influenzae (strain PittEE).